A 147-amino-acid chain; its full sequence is Large ribosomal subunit protein uL16c (147 aa).

A compositionally biased stretch (basic residues) spans 1–17 (MLSPKRTRFRKQHRGRM). Residues 1 to 20 (MLSPKRTRFRKQHRGRMKGI) form a disordered region.

This sequence belongs to the universal ribosomal protein uL16 family. Part of the 50S ribosomal subunit.

Its subcellular location is the plastid. It is found in the chloroplast. In Ipomoea purpurea (Common morning glory), this protein is Large ribosomal subunit protein uL16c.